The sequence spans 346 residues: Probable 3-hydroxyacyl-CoA dehydrogenase (346 aa).

A disordered region spans residues 322 to 346 (RANLSPSATPCTPWKARKATSCAPP).

Belongs to the 3-hydroxyacyl-CoA dehydrogenase family.

The enzyme catalyses a (3S)-3-hydroxyacyl-CoA + NAD(+) = a 3-oxoacyl-CoA + NADH + H(+). This chain is Probable 3-hydroxyacyl-CoA dehydrogenase, found in Deinococcus radiodurans (strain ATCC 13939 / DSM 20539 / JCM 16871 / CCUG 27074 / LMG 4051 / NBRC 15346 / NCIMB 9279 / VKM B-1422 / R1).